Here is a 103-residue protein sequence, read N- to C-terminus: MSGRGKGGKGLGKGGAKRHRKILRDNIQGITKPAIRRLARRGGVKRISGLIYEEVRAVLKSFLESVIRDAVTYTEHAKRKTVTSLDVVYALKRQGRTLYGFGG.

A compositionally biased stretch (gly residues) spans 1–14 (MSGRGKGGKGLGKG). The disordered stretch occupies residues 1–20 (MSGRGKGGKGLGKGGAKRHR). Lysine 6 is modified (N6-acetyl-N6-methyllysine; alternate). An N6-methyllysine; alternate mark is found at lysine 6, lysine 9, and lysine 13. Position 13 is an N6-acetyl-N6-methyllysine; alternate (lysine 13). Residues 17-21 (KRHRK) mediate DNA binding. Lysine 92 bears the N6-glutaryllysine mark.

This sequence belongs to the histone H4 family. In terms of assembly, the nucleosome is a histone octamer containing two molecules each of H2A, H2B, H3 and H4 assembled in one H3-H4 heterotetramer and two H2A-H2B heterodimers. The octamer wraps approximately 147 bp of DNA. Glutarylation at Lys-92 (H4K91glu) destabilizes nucleosomes by promoting dissociation of the H2A-H2B dimers from nucleosomes.

The protein resides in the nucleus. It localises to the chromosome. Core component of nucleosome. Nucleosomes wrap and compact DNA into chromatin, limiting DNA accessibility to the cellular machineries which require DNA as a template. Histones thereby play a central role in transcription regulation, DNA repair, DNA replication and chromosomal stability. DNA accessibility is regulated via a complex set of post-translational modifications of histones, also called histone code, and nucleosome remodeling. This Candida glabrata (strain ATCC 2001 / BCRC 20586 / JCM 3761 / NBRC 0622 / NRRL Y-65 / CBS 138) (Yeast) protein is Histone H4 (HHF1).